The primary structure comprises 248 residues: PF03932 family protein CutC (248 aa).

The protein belongs to the CutC family. Homodimer.

It localises to the cytoplasm. The protein is PF03932 family protein CutC of Salmonella paratyphi A (strain AKU_12601).